A 261-amino-acid chain; its full sequence is tRNA U34 carboxymethyltransferase (261 aa).

Residues Lys-25, Trp-39, Lys-44, Gly-63, 114–115 (VE), Tyr-135, and Arg-250 each bind carboxy-S-adenosyl-L-methionine.

The protein belongs to the class I-like SAM-binding methyltransferase superfamily. CmoB family. Homotetramer.

It catalyses the reaction carboxy-S-adenosyl-L-methionine + 5-hydroxyuridine(34) in tRNA = 5-carboxymethoxyuridine(34) in tRNA + S-adenosyl-L-homocysteine + H(+). Functionally, catalyzes carboxymethyl transfer from carboxy-S-adenosyl-L-methionine (Cx-SAM) to 5-hydroxyuridine (ho5U) to form 5-carboxymethoxyuridine (cmo5U) at position 34 in tRNAs. The chain is tRNA U34 carboxymethyltransferase from Helicobacter pylori (strain P12).